Consider the following 730-residue polypeptide: Polyribonucleotide nucleotidyltransferase (730 aa).

Mg(2+)-binding residues include aspartate 489 and aspartate 495. A KH domain is found at 556 to 615; sequence PKIDTIKVDVDKIKIVIGKGGETIDKIIEETGVKIDIDEDGNIAIYSSDQEAINRTKEII. Residues 625 to 693 form the S1 motif domain; that stretch reads GEIYEAEVVR…DKGRIDASMK (69 aa). Residues 691–730 are disordered; the sequence is SMKALLPRPPRSEKSNKEDHQSVRHHGSPKDDKGKEKYDK. Residues 700 to 730 show a composition bias toward basic and acidic residues; the sequence is PRSEKSNKEDHQSVRHHGSPKDDKGKEKYDK.

Belongs to the polyribonucleotide nucleotidyltransferase family. It depends on Mg(2+) as a cofactor.

It localises to the cytoplasm. The catalysed reaction is RNA(n+1) + phosphate = RNA(n) + a ribonucleoside 5'-diphosphate. In terms of biological role, involved in mRNA degradation. Catalyzes the phosphorolysis of single-stranded polyribonucleotides processively in the 3'- to 5'-direction. The chain is Polyribonucleotide nucleotidyltransferase from Streptococcus mutans serotype c (strain ATCC 700610 / UA159).